The primary structure comprises 365 residues: MSRPVPNPGILDIAPYTPGKSPVAEPGRKVFKLSANETPFGPSPHAIAAYKSAADHLEDYPEGTSRVLREAIGRAYGLDPDRIICGAGSDEILNLLAHTYLGPDDEAISTTHGFLVYPIATLANGARNVVAEEKDLTCNVDAILAKVSPKTKIVWLANPNNPTGTYIPFDEVKRLRAGLPGHVVLVLDAAYADYVSRNDYEIGIELVATTDNTVMTHTFSKIHGLAALRIGWMFGPANIVDAVNRIRGPFNVSVPAQLAAVAAIQDSAHVEKSRTHTEQWRNRLTEELTKIGLTVTPSVCNFVLMHFPTTKGKTAAEADAFLTKRGLVLRALGNYNLPHALRMTIGTDEANELVIEGLREFMAQP.

Residues 1–22 are disordered; the sequence is MSRPVPNPGILDIAPYTPGKSP. Lysine 221 is subject to N6-(pyridoxal phosphate)lysine.

Belongs to the class-II pyridoxal-phosphate-dependent aminotransferase family. Histidinol-phosphate aminotransferase subfamily. Homodimer. Pyridoxal 5'-phosphate is required as a cofactor.

It catalyses the reaction L-histidinol phosphate + 2-oxoglutarate = 3-(imidazol-4-yl)-2-oxopropyl phosphate + L-glutamate. It functions in the pathway amino-acid biosynthesis; L-histidine biosynthesis; L-histidine from 5-phospho-alpha-D-ribose 1-diphosphate: step 7/9. This Rhodopseudomonas palustris (strain BisB5) protein is Histidinol-phosphate aminotransferase.